A 260-amino-acid chain; its full sequence is Deoxyribonuclease-1 (260 aa).

A glycan (N-linked (GlcNAc...) asparagine) is linked at N18. E78 is a catalytic residue. C101 and C104 form a disulfide bridge. The active site involves H134. C173 and C209 are disulfide-bonded.

It belongs to the DNase I family. Ca(2+) is required as a cofactor. Mg(2+) serves as cofactor.

The protein resides in the secreted. It localises to the zymogen granule. Its subcellular location is the nucleus envelope. The catalysed reaction is Endonucleolytic cleavage to 5'-phosphodinucleotide and 5'-phosphooligonucleotide end-products.. Functionally, serum endocuclease secreted into body fluids by a wide variety of exocrine and endocrine organs. Expressed by non-hematopoietic tissues and preferentially cleaves protein-free DNA. Among other functions, seems to be involved in cell death by apoptosis. Binds specifically to G-actin and blocks actin polymerization. Together with DNASE1L3, plays a key role in degrading neutrophil extracellular traps (NETs). NETs are mainly composed of DNA fibers and are released by neutrophils to bind pathogens during inflammation. Degradation of intravascular NETs by DNASE1 and DNASE1L3 is required to prevent formation of clots that obstruct blood vessels and cause organ damage following inflammation. In Ovis aries (Sheep), this protein is Deoxyribonuclease-1 (DNASE1).